A 351-amino-acid chain; its full sequence is Outer membrane porin PhoE (351 aa).

Positions Met-1–Ala-21 are cleaved as a signal peptide.

This sequence belongs to the Gram-negative porin family. As to quaternary structure, homotrimer. Forms mixed heterotrimers with OmpC and with OmpF; other mixed heterotrimers are also probable.

The protein resides in the cell outer membrane. In terms of biological role, uptake of inorganic phosphate, phosphorylated compounds, and some other negatively charged solutes. This is Outer membrane porin PhoE (phoE) from Escherichia coli (strain K12).